The chain runs to 273 residues: Ribosomal RNA small subunit methyltransferase A (273 aa).

Residues Asn23, Ile25, Gly50, Glu72, Asp97, and Asn116 each contribute to the S-adenosyl-L-methionine site.

This sequence belongs to the class I-like SAM-binding methyltransferase superfamily. rRNA adenine N(6)-methyltransferase family. RsmA subfamily.

The protein resides in the cytoplasm. The enzyme catalyses adenosine(1518)/adenosine(1519) in 16S rRNA + 4 S-adenosyl-L-methionine = N(6)-dimethyladenosine(1518)/N(6)-dimethyladenosine(1519) in 16S rRNA + 4 S-adenosyl-L-homocysteine + 4 H(+). Specifically dimethylates two adjacent adenosines (A1518 and A1519) in the loop of a conserved hairpin near the 3'-end of 16S rRNA in the 30S particle. May play a critical role in biogenesis of 30S subunits. This Rickettsia akari (strain Hartford) protein is Ribosomal RNA small subunit methyltransferase A.